The sequence spans 273 residues: Citrate lyase subunit beta-like protein (273 aa).

Residues Arg64 and Glu112 each coordinate substrate. 2 residues coordinate Mg(2+): Glu112 and Asp138.

It belongs to the HpcH/HpaI aldolase family. Citrate lyase beta subunit-like subfamily. In terms of assembly, homotrimer. It depends on Mg(2+) as a cofactor.

Its function is as follows. May play a role in fatty acid biosynthesis. This chain is Citrate lyase subunit beta-like protein (citE), found in Mycobacterium tuberculosis (strain CDC 1551 / Oshkosh).